The sequence spans 278 residues: Large ribosomal subunit protein uL2 (278 aa).

The interval 226–278 (MNPIDHPHGGGEGKTAAGRHPVSPWGTPSKGSRTRKNKRTSNMIVRSRYSKKG) is disordered.

This sequence belongs to the universal ribosomal protein uL2 family. Part of the 50S ribosomal subunit. Forms a bridge to the 30S subunit in the 70S ribosome.

Functionally, one of the primary rRNA binding proteins. Required for association of the 30S and 50S subunits to form the 70S ribosome, for tRNA binding and peptide bond formation. It has been suggested to have peptidyltransferase activity; this is somewhat controversial. Makes several contacts with the 16S rRNA in the 70S ribosome. The chain is Large ribosomal subunit protein uL2 from Nitrosomonas europaea (strain ATCC 19718 / CIP 103999 / KCTC 2705 / NBRC 14298).